Reading from the N-terminus, the 104-residue chain is Small ribosomal subunit protein uS10 (104 aa).

It belongs to the universal ribosomal protein uS10 family. Part of the 30S ribosomal subunit.

In terms of biological role, involved in the binding of tRNA to the ribosomes. The sequence is that of Small ribosomal subunit protein uS10 from Dichelobacter nodosus (strain VCS1703A).